The primary structure comprises 112 residues: UPF0342 protein SPP_1392 (112 aa).

This sequence belongs to the UPF0342 family.

The chain is UPF0342 protein SPP_1392 from Streptococcus pneumoniae (strain P1031).